The sequence spans 234 residues: Ribonuclease 3 (234 aa).

The RNase III domain occupies 13-136 (YITLEKALGY…LMAGVYLEAG (124 aa)). E49 lines the Mg(2+) pocket. The active site involves D53. The Mg(2+) site is built by S122 and E125. The active site involves E125. The DRBM domain occupies 163–232 (DYKTALQELT…AYQALQKLKG (70 aa)).

This sequence belongs to the ribonuclease III family. Homodimer. Requires Mg(2+) as cofactor.

It localises to the cytoplasm. It catalyses the reaction Endonucleolytic cleavage to 5'-phosphomonoester.. Its function is as follows. Digests double-stranded RNA. Involved in the processing of primary rRNA transcript to yield the immediate precursors to the large and small rRNAs (23S and 16S). Processes some mRNAs, and tRNAs when they are encoded in the rRNA operon. Processes pre-crRNA and tracrRNA of type II CRISPR loci if present in the organism. The chain is Ribonuclease 3 from Helicobacter acinonychis (strain Sheeba).